A 148-amino-acid chain; its full sequence is Small ribosomal subunit protein bS6 (148 aa).

The segment at 96-148 (HEEGQSAMLTRRDDRRERDGDDRPRRREGGFDRGDRGDRGPRRPRDNEAGEGA) is disordered.

Belongs to the bacterial ribosomal protein bS6 family.

Binds together with bS18 to 16S ribosomal RNA. This chain is Small ribosomal subunit protein bS6, found in Brucella abortus biovar 1 (strain 9-941).